Reading from the N-terminus, the 405-residue chain is Serine-type anaerobic sulfatase-maturating enzyme (405 aa).

A Radical SAM core domain is found at 18 to 249 (PRSPVPFHIL…QWRKRCDRGR (232 aa)). Residues Cys-35 and Cys-39 each coordinate [4Fe-4S] cluster. Tyr-41 provides a ligand contact to S-adenosyl-L-methionine. Cys-42 contributes to the [4Fe-4S] cluster binding site. 3 residues coordinate S-adenosyl-L-methionine: Gly-84, Ser-140, and Arg-152. Positions 270, 276, and 291 each coordinate [4Fe-4S] cluster. Asp-292 serves as the catalytic Proton acceptor. The [4Fe-4S] cluster site is built by Cys-331, Cys-334, Cys-340, Cys-344, and Cys-357.

Belongs to the radical SAM superfamily. Anaerobic sulfatase-maturating enzyme family. Monomer. Interacts with AtsA prior to its export to the periplasm. It depends on [4Fe-4S] cluster as a cofactor.

The protein resides in the cytoplasm. It carries out the reaction L-seryl-[sulfatase] + S-adenosyl-L-methionine = 3-oxo-L-alanyl-[sulfatase] + 5'-deoxyadenosine + L-methionine + H(+). It participates in protein modification; sulfatase oxidation. Functionally, involved in 'Ser-type' sulfatase maturation under anaerobic conditions. Catalyzes the post-translational modification of serine ('Ser-72' in the arylsulfatase AtsA) into 3-oxoalanine (also known as C(alpha)-formylglycine (FGly)), by a free radical chemical mechanism initiated via the reductive cleavage of S-adenosyl-L-methionine (SAM). This Klebsiella aerogenes (Enterobacter aerogenes) protein is Serine-type anaerobic sulfatase-maturating enzyme.